Here is a 574-residue protein sequence, read N- to C-terminus: ESX-1 secretion system protein EccA1 (574 aa).

335 to 342 (GPPGTGKT) contacts ATP.

Belongs to the CbxX/CfxQ family. In terms of assembly, part of the ESX-1 / type VII secretion system (T7SS), which is composed of cytosolic and membrane components.

The protein localises to the cytoplasm. In terms of biological role, part of the ESX-1 / type VII specialized secretion system (T7SS), which exports several proteins including EsxA and EsxB. Plays a role in DNA conjugation, in both donor and recipient strains. EccA1 exhibits ATPase activity and may provide energy for the export of ESX-1 substrates. This is ESX-1 secretion system protein EccA1 from Mycolicibacterium smegmatis (strain ATCC 700084 / mc(2)155) (Mycobacterium smegmatis).